We begin with the raw amino-acid sequence, 404 residues long: Probable tRNA sulfurtransferase (404 aa).

In terms of domain architecture, THUMP spans 61–166 (EAVSERLKDV…SGYSYIMCDE (106 aa)). ATP is bound by residues 184–185 (LL), 209–210 (HF), Arg266, Gly288, and Gln297.

Belongs to the ThiI family.

The protein resides in the cytoplasm. The catalysed reaction is [ThiI sulfur-carrier protein]-S-sulfanyl-L-cysteine + a uridine in tRNA + 2 reduced [2Fe-2S]-[ferredoxin] + ATP + H(+) = [ThiI sulfur-carrier protein]-L-cysteine + a 4-thiouridine in tRNA + 2 oxidized [2Fe-2S]-[ferredoxin] + AMP + diphosphate. It carries out the reaction [ThiS sulfur-carrier protein]-C-terminal Gly-Gly-AMP + S-sulfanyl-L-cysteinyl-[cysteine desulfurase] + AH2 = [ThiS sulfur-carrier protein]-C-terminal-Gly-aminoethanethioate + L-cysteinyl-[cysteine desulfurase] + A + AMP + 2 H(+). It functions in the pathway cofactor biosynthesis; thiamine diphosphate biosynthesis. Catalyzes the ATP-dependent transfer of a sulfur to tRNA to produce 4-thiouridine in position 8 of tRNAs, which functions as a near-UV photosensor. Also catalyzes the transfer of sulfur to the sulfur carrier protein ThiS, forming ThiS-thiocarboxylate. This is a step in the synthesis of thiazole, in the thiamine biosynthesis pathway. The sulfur is donated as persulfide by IscS. This Bacillus cereus (strain AH820) protein is Probable tRNA sulfurtransferase.